A 134-amino-acid polypeptide reads, in one-letter code: Peptide methionine sulfoxide reductase MsrB (134 aa).

The region spanning 9 to 131 (DEYWRDKLDA…NSASIQLQKE (123 aa)) is the MsrB domain. 4 residues coordinate Zn(2+): cysteine 48, cysteine 51, cysteine 97, and cysteine 100. The active-site Nucleophile is cysteine 120.

It belongs to the MsrB Met sulfoxide reductase family. Zn(2+) serves as cofactor.

It carries out the reaction L-methionyl-[protein] + [thioredoxin]-disulfide + H2O = L-methionyl-(R)-S-oxide-[protein] + [thioredoxin]-dithiol. In Saccharophagus degradans (strain 2-40 / ATCC 43961 / DSM 17024), this protein is Peptide methionine sulfoxide reductase MsrB.